A 243-amino-acid polypeptide reads, in one-letter code: ABC transporter arginine-binding protein 1 (243 aa).

The first 19 residues, 1–19 (MKKLVLAALLASFTFGASA), serve as a signal peptide directing secretion.

Belongs to the bacterial solute-binding protein 3 family. In terms of assembly, the complex is composed of two ATP-binding proteins (ArtP), two transmembrane proteins (ArtM and ArtQ) and two solute-binding proteins (ArtJ and ArtI).

It is found in the periplasm. Its function is as follows. Part of the ABC transporter complex ArtPIQMJ involved in arginine transport. Binds L-arginine with high affinity. This Escherichia coli (strain K12) protein is ABC transporter arginine-binding protein 1 (artJ).